We begin with the raw amino-acid sequence, 246 residues long: NH(3)-dependent NAD(+) synthetase (246 aa).

Residue 29–36 participates in ATP binding; it reads GLSGGIDS. Mg(2+) is bound at residue Asp-35. Arg-110 provides a ligand contact to deamido-NAD(+). Thr-130 contacts ATP. Glu-135 contacts Mg(2+). Positions 159 and 181 each coordinate ATP.

Belongs to the NAD synthetase family. Homodimer.

It catalyses the reaction deamido-NAD(+) + NH4(+) + ATP = AMP + diphosphate + NAD(+) + H(+). Its pathway is cofactor biosynthesis; NAD(+) biosynthesis; NAD(+) from deamido-NAD(+) (ammonia route): step 1/1. Catalyzes the ATP-dependent amidation of deamido-NAD to form NAD. Uses ammonia as a nitrogen source. The chain is NH(3)-dependent NAD(+) synthetase from Campylobacter jejuni subsp. jejuni serotype O:23/36 (strain 81-176).